Here is a 71-residue protein sequence, read N- to C-terminus: Translation initiation factor IF-1 (71 aa).

One can recognise an S1-like domain in the interval 1–71; the sequence is MSKDDLIQFT…LTKGRVIHRH (71 aa).

Belongs to the IF-1 family. Component of the 30S ribosomal translation pre-initiation complex which assembles on the 30S ribosome in the order IF-2 and IF-3, IF-1 and N-formylmethionyl-tRNA(fMet); mRNA recruitment can occur at any time during PIC assembly.

It is found in the cytoplasm. Its function is as follows. One of the essential components for the initiation of protein synthesis. Stabilizes the binding of IF-2 and IF-3 on the 30S subunit to which N-formylmethionyl-tRNA(fMet) subsequently binds. Helps modulate mRNA selection, yielding the 30S pre-initiation complex (PIC). Upon addition of the 50S ribosomal subunit IF-1, IF-2 and IF-3 are released leaving the mature 70S translation initiation complex. This Rickettsia felis (strain ATCC VR-1525 / URRWXCal2) (Rickettsia azadi) protein is Translation initiation factor IF-1.